The primary structure comprises 432 residues: Peptidase B (432 aa).

Mn(2+) contacts are provided by Lys-196 and Asp-201. Lys-208 is an active-site residue. The Mn(2+) site is built by Asp-219, Asp-278, and Glu-280. Residue Arg-282 is part of the active site.

The protein belongs to the peptidase M17 family. Homohexamer. Requires Mn(2+) as cofactor.

It localises to the cytoplasm. It carries out the reaction Release of an N-terminal amino acid, Xaa, from a peptide or arylamide. Xaa is preferably Glu or Asp but may be other amino acids, including Leu, Met, His, Cys and Gln.. Functionally, probably plays an important role in intracellular peptide degradation. The sequence is that of Peptidase B from Vibrio vulnificus (strain CMCP6).